The chain runs to 637 residues: Biosynthetic arginine decarboxylase (637 aa).

An N6-(pyridoxal phosphate)lysine modification is found at K101. Residue 286–296 (VDIGGGLGVDY) coordinates substrate.

This sequence belongs to the Orn/Lys/Arg decarboxylase class-II family. SpeA subfamily. Mg(2+) is required as a cofactor. Requires pyridoxal 5'-phosphate as cofactor.

The enzyme catalyses L-arginine + H(+) = agmatine + CO2. The protein operates within amine and polyamine biosynthesis; agmatine biosynthesis; agmatine from L-arginine: step 1/1. In terms of biological role, catalyzes the biosynthesis of agmatine from arginine. The chain is Biosynthetic arginine decarboxylase from Marinobacter nauticus (strain ATCC 700491 / DSM 11845 / VT8) (Marinobacter aquaeolei).